Reading from the N-terminus, the 464-residue chain is Protein FAM90A14 (464 aa).

Disordered stretches follow at residues 1-42 (MMAR…DPRL), 70-389 (PATL…HDGA), and 411-437 (APSFHSPEKPGAFLAQSPHVSEKSEAP). Composition is skewed to basic and acidic residues over residues 74 to 89 (GKKEGKENLKPWKPRV) and 97 to 114 (NKDKGEKEERPRQQDPQR). Positions 180 to 197 (LASLSPLRKASLSSSSSL) are enriched in low complexity.

It belongs to the FAM90 family.

In Homo sapiens (Human), this protein is Protein FAM90A14.